A 128-amino-acid chain; its full sequence is Mediator of RNA polymerase II transcription subunit 31-A (128 aa).

Belongs to the Mediator complex subunit 31 family. Component of the Mediator complex.

The protein resides in the nucleus. Functionally, component of the Mediator complex, a coactivator involved in the regulated transcription of nearly all RNA polymerase II-dependent genes. Mediator functions as a bridge to convey information from gene-specific regulatory proteins to the basal RNA polymerase II transcription machinery. Mediator is recruited to promoters by direct interactions with regulatory proteins and serves as a scaffold for the assembly of a functional preinitiation complex with RNA polymerase II and the general transcription factors. This is Mediator of RNA polymerase II transcription subunit 31-A (med31-a) from Xenopus laevis (African clawed frog).